The chain runs to 235 residues: Ribonuclease 3 (235 aa).

The 127-residue stretch at 11 to 137 folds into the RNase III domain; sequence RAWCAEALGY…VVGALYLDGG (127 aa). Glu-51 lines the Mg(2+) pocket. The active site involves Asp-55. Residues Asp-123 and Glu-126 each contribute to the Mg(2+) site. Residue Glu-126 is part of the active site. The 70-residue stretch at 164-233 folds into the DRBM domain; the sequence is DYKTQLQEQL…ARQALMPEHH (70 aa).

This sequence belongs to the ribonuclease III family. In terms of assembly, homodimer. Mg(2+) serves as cofactor.

The protein resides in the cytoplasm. The enzyme catalyses Endonucleolytic cleavage to 5'-phosphomonoester.. Digests double-stranded RNA. Involved in the processing of primary rRNA transcript to yield the immediate precursors to the large and small rRNAs (23S and 16S). Processes some mRNAs, and tRNAs when they are encoded in the rRNA operon. Processes pre-crRNA and tracrRNA of type II CRISPR loci if present in the organism. This chain is Ribonuclease 3, found in Symbiobacterium thermophilum (strain DSM 24528 / JCM 14929 / IAM 14863 / T).